Consider the following 718-residue polypeptide: Acetolactate synthase, mitochondrial (718 aa).

2 disordered regions span residues 1–50 (MLTR…APVY) and 72–101 (RKIQ…APQP). Polar residues predominate over residues 32–45 (RYSNNIHTSSTQNA). A compositionally biased stretch (low complexity) spans 76–99 (SSASTAAASPAVRPQPAQHFQAAP). E173 provides a ligand contact to thiamine diphosphate. Residue R275 participates in FAD binding. The disordered stretch occupies residues 296-327 (IPAKSAQPGHSPYLPSNPLNPSSQPSDPLPGD). Residues 306 to 325 (SPYLPSNPLNPSSQPSDPLP) are compositionally biased toward low complexity. FAD-binding positions include 397-418 (HGSA…LGVR) and 449-468 (EIQP…VLGD). The thiamine pyrophosphate binding stretch occupies residues 541–621 (QHQMWACQYY…VKVLLFNNEF (81 aa)). Mg(2+) contacts are provided by D592 and N619.

It belongs to the TPP enzyme family. The cofactor is Mg(2+). Thiamine diphosphate is required as a cofactor.

It localises to the mitochondrion. The catalysed reaction is 2 pyruvate + H(+) = (2S)-2-acetolactate + CO2. It functions in the pathway amino-acid biosynthesis; L-isoleucine biosynthesis; L-isoleucine from 2-oxobutanoate: step 1/4. It participates in amino-acid biosynthesis; L-valine biosynthesis; L-valine from pyruvate: step 1/4. The sequence is that of Acetolactate synthase, mitochondrial (ILV2) from Cryptococcus neoformans var. neoformans serotype D (strain JEC21 / ATCC MYA-565) (Filobasidiella neoformans).